The primary structure comprises 384 residues: Queuine tRNA-ribosyltransferase (384 aa).

Residue aspartate 92 is the Proton acceptor of the active site. Residues 92-96 (DSGGF), aspartate 146, glutamine 190, and glycine 217 contribute to the substrate site. Residues 248 to 254 (GVGRPED) form an RNA binding region. Aspartate 267 functions as the Nucleophile in the catalytic mechanism. The segment at 272–276 (TRHAR) is RNA binding; important for wobble base 34 recognition. Zn(2+)-binding residues include cysteine 305, cysteine 307, cysteine 310, and histidine 337.

This sequence belongs to the queuine tRNA-ribosyltransferase family. In terms of assembly, homodimer. Within each dimer, one monomer is responsible for RNA recognition and catalysis, while the other monomer binds to the replacement base PreQ1. The cofactor is Zn(2+).

It carries out the reaction 7-aminomethyl-7-carbaguanine + guanosine(34) in tRNA = 7-aminomethyl-7-carbaguanosine(34) in tRNA + guanine. It functions in the pathway tRNA modification; tRNA-queuosine biosynthesis. Functionally, catalyzes the base-exchange of a guanine (G) residue with the queuine precursor 7-aminomethyl-7-deazaguanine (PreQ1) at position 34 (anticodon wobble position) in tRNAs with GU(N) anticodons (tRNA-Asp, -Asn, -His and -Tyr). Catalysis occurs through a double-displacement mechanism. The nucleophile active site attacks the C1' of nucleotide 34 to detach the guanine base from the RNA, forming a covalent enzyme-RNA intermediate. The proton acceptor active site deprotonates the incoming PreQ1, allowing a nucleophilic attack on the C1' of the ribose to form the product. After dissociation, two additional enzymatic reactions on the tRNA convert PreQ1 to queuine (Q), resulting in the hypermodified nucleoside queuosine (7-(((4,5-cis-dihydroxy-2-cyclopenten-1-yl)amino)methyl)-7-deazaguanosine). The polypeptide is Queuine tRNA-ribosyltransferase (Xylella fastidiosa (strain 9a5c)).